Reading from the N-terminus, the 545-residue chain is Chaperonin GroEL (545 aa).

ATP contacts are provided by residues 30-33, Lys51, 87-91, Gly415, and Asp496; these read TLGP and DGTTT. The disordered stretch occupies residues 526–545; that stretch reads PEPKAPAGGMPDMGGMGGMM. Gly residues predominate over residues 536–545; it reads PDMGGMGGMM.

It belongs to the chaperonin (HSP60) family. Forms a cylinder of 14 subunits composed of two heptameric rings stacked back-to-back. Interacts with the co-chaperonin GroES.

The protein resides in the cytoplasm. The enzyme catalyses ATP + H2O + a folded polypeptide = ADP + phosphate + an unfolded polypeptide.. In terms of biological role, together with its co-chaperonin GroES, plays an essential role in assisting protein folding. The GroEL-GroES system forms a nano-cage that allows encapsulation of the non-native substrate proteins and provides a physical environment optimized to promote and accelerate protein folding. This Paracoccus denitrificans (strain Pd 1222) protein is Chaperonin GroEL.